The sequence spans 313 residues: Formimidoylglutamase (313 aa).

Mn(2+) contacts are provided by histidine 130, aspartate 155, histidine 157, aspartate 159, aspartate 241, and aspartate 243.

The protein belongs to the arginase family. Requires Mn(2+) as cofactor.

The catalysed reaction is N-formimidoyl-L-glutamate + H2O = formamide + L-glutamate. It participates in amino-acid degradation; L-histidine degradation into L-glutamate; L-glutamate from N-formimidoyl-L-glutamate (hydrolase route): step 1/1. Catalyzes the conversion of N-formimidoyl-L-glutamate to L-glutamate and formamide. This is Formimidoylglutamase from Citrobacter koseri (strain ATCC BAA-895 / CDC 4225-83 / SGSC4696).